The chain runs to 578 residues: Probable multidrug ABC transporter ATP-binding protein YbhF (578 aa).

2 consecutive ABC transporter domains span residues 6–237 (ITLN…LMTS) and 330–559 (IEAK…PDPT). ATP contacts are provided by residues 40–47 (GPDGAGKT) and 362–369 (GPNGAGKS).

This sequence belongs to the ABC transporter superfamily. As to quaternary structure, the complex is probably composed of two ATP-binding proteins (YbhF) and two transmembrane proteins (YbhR and YbhS).

Its function is as follows. Part of the ABC transporter complex YbhFSR that could be involved in efflux of cefoperazone. Probably responsible for energy coupling to the transport system. In Escherichia coli (strain K12), this protein is Probable multidrug ABC transporter ATP-binding protein YbhF (ybhF).